The following is a 578-amino-acid chain: DNA polymerase III subunit gamma/tau (578 aa).

Residue 42-49 (GPRGCGKT) coordinates ATP. Zn(2+) contacts are provided by Cys61, Cys70, Cys73, and Cys76. 2 disordered regions span residues 389-423 (APQAVPRPSAAAAEPKHQPAREPRPVLAPTPASSE) and 525-559 (AVNPAPTANSTQRDEEEHMLAEAGRGDPSPRRDPE). Basic and acidic residues-rich tracts occupy residues 402–412 (EPKHQPAREPR) and 536–559 (QRDEEEHMLAEAGRGDPSPRRDPE).

Belongs to the DnaX/STICHEL family. In terms of assembly, DNA polymerase III contains a core (composed of alpha, epsilon and theta chains) that associates with a tau subunit. This core dimerizes to form the POLIII' complex. PolIII' associates with the gamma complex (composed of gamma, delta, delta', psi and chi chains) and with the beta chain to form the complete DNA polymerase III complex.

The enzyme catalyses DNA(n) + a 2'-deoxyribonucleoside 5'-triphosphate = DNA(n+1) + diphosphate. In terms of biological role, DNA polymerase III is a complex, multichain enzyme responsible for most of the replicative synthesis in bacteria. This DNA polymerase also exhibits 3' to 5' exonuclease activity. This is DNA polymerase III subunit gamma/tau (dnaX) from Mycobacterium bovis (strain ATCC BAA-935 / AF2122/97).